We begin with the raw amino-acid sequence, 579 residues long: Protein LYRIC (579 aa).

The Lumenal segment spans residues 1–48; it reads MAARSWQDELAQQAEEGSARLRELLSVGLGFLRTELGLDLGLEPKRYP. The interval 1–71 is activation of NF-kappa-B; sequence MAARSWQDEL…LLLFLLGYGW (71 aa). The chain crosses the membrane as a helical span at residues 49–69; that stretch reads GWVILVGTGALGLLLLFLLGY. Over 70 to 579 the chain is Cytoplasmic; that stretch reads GWAAACAGAR…KKKKKARRET (510 aa). The tract at residues 72–168 is interaction with BCCIP; it reads AAACAGARKK…EKSKKNKKKS (97 aa). Residues 78-222 form a disordered region; sequence ARKKRRSPPR…SGSLDSTIPG (145 aa). Residues 100–204 form an interaction with RELA region; the sequence is DDLAQLKNLR…ISHREKRQQR (105 aa). A compositionally biased stretch (basic and acidic residues) spans 108–126; it reads LRSEEQKKKNRKKLPEKPK. The span at 159-168 shows a compositional bias: basic residues; the sequence is EKSKKNKKKS. Residue S179 is modified to Phosphoserine. Basic residues predominate over residues 197–207; sequence HREKRQQRKRD. Residues S215 and S250 each carry the phosphoserine modification. At K263 the chain carries N6-acetyllysine. The interval 277-579 is disordered; the sequence is NLTVNGGGWS…KKKKKARRET (303 aa). Phosphoserine occurs at positions 297, 303, and 308. Residues 317–329 are compositionally biased toward polar residues; the sequence is SAWTQDTGDTNAN. Phosphoserine occurs at positions 341 and 366. Composition is skewed to polar residues over residues 351–369, 380–391, and 410–420; these read EPVSQSTTSDYQWDVSRNQ, NGLSSADPSSDW, and LKSQEPISNDQ. The segment at 378 to 440 is lung-homing for mammary tumors; that stretch reads GLNGLSSADP…EGALPTGKSK (63 aa). A phosphoserine mark is found at S412 and S423. Basic and acidic residues predominate over residues 421–431; it reads KVSDDDKEKGE. Basic residues predominate over residues 438 to 448; sequence KSKKKKKKKKK. Residues 449–470 show a composition bias toward basic and acidic residues; the sequence is QGEDNSHTQDTEDLEKDTREEL. Phosphoserine occurs at positions 454, 475, 491, and 493. Composition is skewed to polar residues over residues 517 to 533 and 546 to 565; these read PSITLSKGDSDNSSSQV and NAKQNSVPPSQTKSETNWES. S565 is subject to Phosphoserine. The segment covering 568–579 has biased composition (basic residues); it reads QIKKKKKARRET.

As to quaternary structure, interacts with BCCIP, CREBBP/CBP and RELA/p65. As to expression, in the mammary gland, expressed at the apical surface of epithelial cells lining ducts, as well as in the mammary fat pad. Not detected in the spleen, kidney, lung, or skin; minute amounts seen in the liver. Expressed in Purkinje neurons in the early postnatal and adult cerebellum. Overexpressed in mammary tumors (at protein level).

Its subcellular location is the endoplasmic reticulum membrane. The protein resides in the nucleus membrane. It localises to the cell junction. It is found in the tight junction. The protein localises to the nucleus. Its subcellular location is the nucleolus. The protein resides in the cytoplasm. It localises to the perinuclear region. In terms of biological role, down-regulates SLC1A2/EAAT2 promoter activity when expressed ectopically. Activates the nuclear factor kappa-B (NF-kappa-B) transcription factor. Promotes anchorage-independent growth of immortalized melanocytes and astrocytes which is a key component in tumor cell expansion. Promotes lung metastasis and also has an effect on bone and brain metastasis, possibly by enhancing the seeding of tumor cells to the target organ endothelium. Induces chemoresistance. This Mus musculus (Mouse) protein is Protein LYRIC (Mtdh).